The chain runs to 163 residues: Protein-export protein SecB (163 aa).

The protein belongs to the SecB family. Homotetramer, a dimer of dimers. One homotetramer interacts with 1 SecA dimer.

It is found in the cytoplasm. One of the proteins required for the normal export of preproteins out of the cell cytoplasm. It is a molecular chaperone that binds to a subset of precursor proteins, maintaining them in a translocation-competent state. It also specifically binds to its receptor SecA. This Burkholderia ambifaria (strain MC40-6) protein is Protein-export protein SecB.